Reading from the N-terminus, the 709-residue chain is UV-stimulated scaffold protein A (709 aa).

Positions 1-10 (MDQKLSKLVE) are enriched in basic and acidic residues. Positions 1–20 (MDQKLSKLVEELTTSGEPRL) are disordered. The interval 2–145 (DQKLSKLVEE…HFLRHNKKVD (144 aa)) is VHS-like. Residues 165 to 199 (KHLDKIYQERASQAEREMQEMSGEIESCLTEVESC) are a coiled coil. 2 disordered regions span residues 230-289 (SCAG…DSDL) and 386-406 (EGGE…EDDE). Residues 280–289 (PSDEDEDSDL) show a composition bias toward acidic residues. S281 and S287 each carry phosphoserine. Residues 386–395 (EGGERRRTEA) are compositionally biased toward basic and acidic residues. Residues 397–406 (GDAEEDEDDE) show a composition bias toward acidic residues. K414 is covalently cross-linked (Glycyl lysine isopeptide (Lys-Gly) (interchain with G-Cter in ubiquitin)). The segment at 469-495 (DHLPPPSSASPSRALPEPQEAQKLAAE) is disordered. A compositionally biased stretch (low complexity) spans 477–486 (ASPSRALPEP). The UVSSA-type zinc finger occupies 564-591 (QHWCRAPRPDGRLCERQDRLKCPFHGKI). C567, C577, C585, and H588 together coordinate Zn(2+). A disordered region spans residues 588–655 (HGKIVPRDDE…GKGRGKKRRY (68 aa)). Positions 592–632 (VPRDDEGRPLDPEDRAREQRRQLQKQERPEWQDPELMRDVE) are enriched in basic and acidic residues. Residues 646 to 655 (GKGRGKKRRY) show a composition bias toward basic residues.

The protein belongs to the UVSSA family. In terms of assembly, interacts with the elongating form of RNA polymerase II (RNA pol IIo) during transcription stress. Interacts with the TFIIH complex during transcription stress. Interacts with ERCC6. Interacts with ERCC8. Interacts with USP7. Post-translationally, monoubiquitinated at Lys-414 in response to transcription stress; this promotes efficient transfer of TFIIH to stalled RNA polymerase II.

The protein resides in the chromosome. Factor involved in transcription-coupled nucleotide excision repair (TC-NER), a mechanism that rapidly removes RNA polymerase II-blocking lesions from the transcribed strand of active genes. Acts as a key adapter that promotes recruitment of factors involved in TC-NER. Facilitates the ubiquitination of the elongating form of RNA polymerase II (RNA pol IIo) at DNA damage sites, thereby promoting RNA pol IIo backtracking and access by the TC-NER machinery to lesion sites. Also promotes stabilization of ERCC6/CSB by recruiting deubiquitinating enzyme USP7 to TC-NER complexes, preventing UV-induced degradation of ERCC6 by the proteasome. Mediates the recruitment of the TFIIH complex and other factors that are required for nucleotide excision repair to RNA polymerase II. Also required to inactivate stalled RNA polymerase II by blocking the access of TCEA1/TFIIS, thereby preventing reactivation of RNA polymerase II. Not involved in processing oxidative damage. In Homo sapiens (Human), this protein is UV-stimulated scaffold protein A.